The chain runs to 197 residues: TLE family member 5 (197 aa).

The CCN domain stretch occupies residues 166 to 197 (LSALGSQTHLSKEDKNGHDGDTHQEDDGEKSD). Residues 170 to 197 (GSQTHLSKEDKNGHDGDTHQEDDGEKSD) form a disordered region. Residues 175–197 (LSKEDKNGHDGDTHQEDDGEKSD) show a composition bias toward basic and acidic residues. A Phosphoserine modification is found at Ser-196.

Belongs to the WD repeat Groucho/TLE family. Homooligomer and heterooligomer with other family members. Binds TCF7 and the NF-kappa-B subunit RELA. Interacts with PHF12. Interacts (via Q domain) with SIX3. Interacts with SIX6. Ubiquitinated by XIAP/BIRC4. Ubiquitously expressed in developing embryos by midgestation, a wide expression is conserved in adult. In mouse, abundantly expressed in muscle, heart and brain.

The protein resides in the nucleus. Transcriptional corepressor. Acts as a dominant repressor towards other family members. Inhibits NF-kappa-B-regulated gene expression. May be required for the initiation and maintenance of the differentiated state. Essential for the transcriptional repressor activity of SIX3 during retina and lens development. The chain is TLE family member 5 from Mus musculus (Mouse).